Here is a 520-residue protein sequence, read N- to C-terminus: RNA polymerase sigma factor sigA (520 aa).

A chloroplast-targeting transit peptide spans 1–66 (MTATPAVIGL…APATPKLTAV (66 aa)). Positions 37-49 (GGGGGGGGGGGGD) are enriched in gly residues. Disordered regions lie at residues 37 to 57 (GGGG…APPA), 87 to 117 (HHSS…AHAH), and 171 to 190 (SVSA…TKNG). Pro residues predominate over residues 96–108 (APPPPPPPPPTPS). Over residues 175–187 (RQRRMSGRRRGRT) the composition is skewed to basic residues. Residues 305-318 (DLIQGGLIGLLRGI) carry the Polymerase core binding motif. Positions 479–498 (WEDISRQFGLSRERVRQVGL) form a DNA-binding region, H-T-H motif.

The protein belongs to the sigma-70 factor family. Expressed in shoots. Expressed in the tips of fully elongated leaves. Expressed in leaf blades.

The protein resides in the plastid. The protein localises to the chloroplast. Its function is as follows. Sigma factors are initiation factors that promote the attachment of plastid-encoded RNA polymerase (PEP) to specific initiation sites and are then released. Controls the transcription of the psaA and psaB genes in chloroplast, and thus maintains the abundance of the core protein complex PsaA-PsaB of photosystem I (PSI) in the thylakoid membrane. Maintains PSI activity, sufficient rate of electron transfer from PSII to PSI, and photochemical efficiency. The polypeptide is RNA polymerase sigma factor sigA (Oryza sativa subsp. japonica (Rice)).